The primary structure comprises 308 residues: Oxygen-dependent coproporphyrinogen-III oxidase (308 aa).

S97 is a binding site for substrate. Positions 101 and 111 each coordinate a divalent metal cation. The active-site Proton donor is H111. A substrate-binding site is contributed by 113 to 115 (NVR). A divalent metal cation is bound by residues H153 and H183. Positions 248 to 283 (YVEFNLVWDRGTHFGLQSGGRTESILMSMPPLASWS) are important for dimerization. 266–268 (GGR) serves as a coordination point for substrate.

It belongs to the aerobic coproporphyrinogen-III oxidase family. Homodimer. The cofactor is a divalent metal cation.

It is found in the cytoplasm. The catalysed reaction is coproporphyrinogen III + O2 + 2 H(+) = protoporphyrinogen IX + 2 CO2 + 2 H2O. Its pathway is porphyrin-containing compound metabolism; protoporphyrin-IX biosynthesis; protoporphyrinogen-IX from coproporphyrinogen-III (O2 route): step 1/1. Functionally, involved in the heme biosynthesis. Catalyzes the aerobic oxidative decarboxylation of propionate groups of rings A and B of coproporphyrinogen-III to yield the vinyl groups in protoporphyrinogen-IX. This is Oxygen-dependent coproporphyrinogen-III oxidase from Polaromonas sp. (strain JS666 / ATCC BAA-500).